The following is a 570-amino-acid chain: Peptidyl-prolyl cis-trans isomerase-like 2 (570 aa).

One can recognise a U-box domain in the interval 37–110 (KRLPFNFCSL…GDYVDPVTYK (74 aa)). Disordered regions lie at residues 215–253 (RSER…KPTP), 428–449 (STTL…PTPD), and 469–570 (KKAE…SSWD). The span at 234 to 248 (STTTSTQSKTASFQS) shows a compositional bias: low complexity. Positions 298 to 457 (QKGYARISTT…PDIRITDVTI (160 aa)) constitute a PPIase cyclophilin-type domain. Residues 428–446 (STTLNNLETHPVNSSTNRP) are compositionally biased toward polar residues. Residues 469-483 (KKAEEASGKNKKVDP) are compositionally biased toward basic and acidic residues. Acidic residues-rich tracts occupy residues 484–497 (TEED…DDDQ) and 535–550 (QEED…EPEP).

The protein belongs to the cyclophilin-type PPIase family. PPIL2 subfamily.

It localises to the nucleus. It catalyses the reaction [protein]-peptidylproline (omega=180) = [protein]-peptidylproline (omega=0). The catalysed reaction is S-ubiquitinyl-[E2 ubiquitin-conjugating enzyme]-L-cysteine + [acceptor protein]-L-lysine = [E2 ubiquitin-conjugating enzyme]-L-cysteine + N(6)-ubiquitinyl-[acceptor protein]-L-lysine.. In terms of biological role, may catalyze the cis-trans isomerization of proline imidic peptide bonds in oligopeptides thereby assisting the folding of proteins. May also function as a chaperone, playing a role in intracellular transport of proteins. May also have a protein ubiquitin ligase activity acting as an E3 ubiquitin protein ligase or as a ubiquitin-ubiquitin ligase promoting elongation of ubiquitin chains on proteins. The protein is Peptidyl-prolyl cis-trans isomerase-like 2 (cyp8) of Aspergillus oryzae (strain ATCC 42149 / RIB 40) (Yellow koji mold).